The primary structure comprises 115 residues: NADH-ubiquinone oxidoreductase chain 3 (115 aa).

Transmembrane regions (helical) follow at residues 3–23, 55–75, and 86–106; these read LALALMINTLLALLLMTITFW, FFLVAITFLLFDLEIALLLPL, and LTIASSLTLITILILSLAYEW.

It belongs to the complex I subunit 3 family. As to quaternary structure, core subunit of respiratory chain NADH dehydrogenase (Complex I) which is composed of 45 different subunits. Interacts with TMEM186. Interacts with TMEM242.

It localises to the mitochondrion inner membrane. It catalyses the reaction a ubiquinone + NADH + 5 H(+)(in) = a ubiquinol + NAD(+) + 4 H(+)(out). Functionally, core subunit of the mitochondrial membrane respiratory chain NADH dehydrogenase (Complex I) which catalyzes electron transfer from NADH through the respiratory chain, using ubiquinone as an electron acceptor. Essential for the catalytic activity of complex I. The polypeptide is NADH-ubiquinone oxidoreductase chain 3 (Hylobates lar (Lar gibbon)).